Consider the following 30-residue polypeptide: GCCGPYPNAACHPCGCKVGRPPYCDRPSGG.

Disulfide bonds link cysteine 2–cysteine 16, cysteine 3–cysteine 11, and cysteine 14–cysteine 24. Residues proline 7, proline 13, proline 21, proline 22, and proline 27 each carry the 4-hydroxyproline modification. Glycine 30 carries the glycine amide modification.

Expressed by the venom duct.

The protein localises to the secreted. In terms of biological role, alpha-conotoxins act on postsynaptic membranes, they bind to the nicotinic acetylcholine receptors (nAChR) and thus inhibit them. This toxin binds with high affinity to both fetal (alpha-1-beta-1-epsilon-delta (CHRNA1-CHRNB1-CHRND-CHRNE) subunits) and adult (alpha-1/beta-1/gamma/delta subunits) mammalian muscle nicotinic acetylcholine receptors (nAChR). The sequence is that of Alpha-conotoxin EIVA from Conus ermineus (Agate cone).